The chain runs to 437 residues: MRTKSLKKNKINVITLGCSKNVYDSEVLMGQLRANGKEVTHEATAKDEGNIIVINTCGFIDNAKAESVNMILEYADKKDKGLVDKVFVTGCLSERYRPDLEKEIPNVDQYFGTTELPQLLKALGADYKHELLGERLTTTPKNYAYLKIAEGCDRPCSFCAIPLMRGSHVSQPIEKLVKEAQGLAKNGVKELILIAQDLTYYGLDLYKKRNLAELLEALAAVEGIEWIRLHYAYPTGFPMDVLELMKREPKICNYIDIPLQHISDSILKSMRRGTTQAKTTQLLKDFRAAVPGMAIRTTLIVGYPGETQEDFEILKEFVQEMKFDRMGCFAYSHEENTHAYLLEDDVPDDVKQARANEIMELQSQISWDLNQEKVGQVFRCIIDRKEGAHFVGRTEFDSPDVDNEVLIDASKHYVKTGEFVNIKIIEATEFDLYGEPA.

Residues 9 to 128 enclose the MTTase N-terminal domain; the sequence is NKINVITLGC…LLKALGADYK (120 aa). The [4Fe-4S] cluster site is built by cysteine 18, cysteine 57, cysteine 91, cysteine 152, cysteine 156, and cysteine 159. Positions 138–368 constitute a Radical SAM core domain; the sequence is TTPKNYAYLK…MELQSQISWD (231 aa). The 67-residue stretch at 371 to 437 folds into the TRAM domain; sequence QEKVGQVFRC…TEFDLYGEPA (67 aa).

It belongs to the methylthiotransferase family. RimO subfamily. Requires [4Fe-4S] cluster as cofactor.

It localises to the cytoplasm. It catalyses the reaction L-aspartate(89)-[ribosomal protein uS12]-hydrogen + (sulfur carrier)-SH + AH2 + 2 S-adenosyl-L-methionine = 3-methylsulfanyl-L-aspartate(89)-[ribosomal protein uS12]-hydrogen + (sulfur carrier)-H + 5'-deoxyadenosine + L-methionine + A + S-adenosyl-L-homocysteine + 2 H(+). Functionally, catalyzes the methylthiolation of an aspartic acid residue of ribosomal protein uS12. This Flavobacterium johnsoniae (strain ATCC 17061 / DSM 2064 / JCM 8514 / BCRC 14874 / CCUG 350202 / NBRC 14942 / NCIMB 11054 / UW101) (Cytophaga johnsonae) protein is Ribosomal protein uS12 methylthiotransferase RimO.